Reading from the N-terminus, the 210-residue chain is Thymidylate kinase (210 aa).

ATP is bound at residue 10–17 (GPEGAGKS).

It belongs to the thymidylate kinase family.

It catalyses the reaction dTMP + ATP = dTDP + ADP. Phosphorylation of dTMP to form dTDP in both de novo and salvage pathways of dTTP synthesis. The sequence is that of Thymidylate kinase from Ectopseudomonas mendocina (strain ymp) (Pseudomonas mendocina).